The sequence spans 273 residues: Dermonecrotic toxin LspaSicTox-alphaIA2i (273 aa).

Residue histidine 5 is part of the active site. Mg(2+) contacts are provided by glutamate 25 and aspartate 27. Histidine 41 acts as the Nucleophile in catalysis. Cystine bridges form between cysteine 45–cysteine 51 and cysteine 47–cysteine 190. A Mg(2+)-binding site is contributed by aspartate 85.

The protein belongs to the arthropod phospholipase D family. Class II subfamily. It depends on Mg(2+) as a cofactor. Expressed by the venom gland.

The protein resides in the secreted. The enzyme catalyses an N-(acyl)-sphingosylphosphocholine = an N-(acyl)-sphingosyl-1,3-cyclic phosphate + choline. It catalyses the reaction an N-(acyl)-sphingosylphosphoethanolamine = an N-(acyl)-sphingosyl-1,3-cyclic phosphate + ethanolamine. It carries out the reaction a 1-acyl-sn-glycero-3-phosphocholine = a 1-acyl-sn-glycero-2,3-cyclic phosphate + choline. The catalysed reaction is a 1-acyl-sn-glycero-3-phosphoethanolamine = a 1-acyl-sn-glycero-2,3-cyclic phosphate + ethanolamine. Dermonecrotic toxins cleave the phosphodiester linkage between the phosphate and headgroup of certain phospholipids (sphingolipid and lysolipid substrates), forming an alcohol (often choline) and a cyclic phosphate. This toxin acts on sphingomyelin (SM). It may also act on ceramide phosphoethanolamine (CPE), lysophosphatidylcholine (LPC) and lysophosphatidylethanolamine (LPE), but not on lysophosphatidylserine (LPS), and lysophosphatidylglycerol (LPG). It acts by transphosphatidylation, releasing exclusively cyclic phosphate products as second products. Induces dermonecrosis, hemolysis, increased vascular permeability, edema, inflammatory response, and platelet aggregation. The protein is Dermonecrotic toxin LspaSicTox-alphaIA2i of Loxosceles spadicea (Recluse spider).